The chain runs to 329 residues: Caveolae-associated protein 4a (329 aa).

2 disordered regions span residues 198-260 and 274-329; these read SKEN…NIAK and KERT…IHED. The stretch at 198–262 forms a coiled coil; sequence SKENMNKTRE…RLKENIAKKA (65 aa). Positions 201-220 are enriched in basic and acidic residues; the sequence is NMNKTREKTRENLSKTKESL. A compositionally biased stretch (polar residues) spans 221–232; the sequence is SKTGQTLGTKFN. The segment covering 242–260 has biased composition (basic and acidic residues); sequence EQREKIKQSSERLKENIAK. Residues 279-290 show a composition bias toward low complexity; it reads AEGQEGAEAEPA. T292 is subject to Phosphothreonine. The span at 310–329 shows a compositional bias: basic and acidic residues; the sequence is TENKREGPVSEEGATRIHED.

The protein belongs to the CAVIN family.

The protein resides in the cytoplasm. Its subcellular location is the myofibril. It localises to the sarcomere. The protein localises to the membrane. It is found in the caveola. In terms of biological role, induces rhoa activation and activates nppa transcription and myofibrillar organization through the rho/rock signaling pathway. The protein is Caveolae-associated protein 4a (cavin4a) of Danio rerio (Zebrafish).